A 1175-amino-acid chain; its full sequence is Phospholipid-transporting ATPase IF (1175 aa).

4 consecutive transmembrane segments (helical) span residues 69-89, 91-111, 287-307, and 338-358; these read FYFL…SPIT, GLPL…EDWL, NTFL…STIL, and FISD…ISLY. Aspartate 407 functions as the 4-aspartylphosphate intermediate in the catalytic mechanism. Residues aspartate 407, lysine 408, threonine 409, glutamate 530, phenylalanine 571, lysine 594, arginine 625, threonine 705, glycine 706, aspartate 707, arginine 793, and lysine 799 each contribute to the ATP site. Aspartate 407 serves as a coordination point for Mg(2+). Threonine 409 contributes to the Mg(2+) binding site. Aspartate 820 is a binding site for Mg(2+). ATP-binding residues include asparagine 823 and aspartate 824. Residue aspartate 824 coordinates Mg(2+). A run of 6 helical transmembrane segments spans residues 862 to 882, 910 to 930, 963 to 983, 994 to 1014, 1033 to 1053, and 1060 to 1080; these read LLFV…QYFF, VYLT…YSLV, WTVL…FLVG, MFGN…TVTV, GSII…WPFL, and FVFI…LMVV.

Belongs to the cation transport ATPase (P-type) (TC 3.A.3) family. Type IV subfamily. As to quaternary structure, component of a P4-ATPase flippase complex which consists of a catalytic alpha subunit ATP11B and an accessory beta subunit TMEM30A. Mg(2+) serves as cofactor. Expressed in retina, brain, liver, testes and kidney (at protein level).

The protein localises to the recycling endosome membrane. It localises to the early endosome. Its subcellular location is the endoplasmic reticulum. It is found in the golgi apparatus. The protein resides in the trans-Golgi network. The catalysed reaction is ATP + H2O + phospholipidSide 1 = ADP + phosphate + phospholipidSide 2.. The enzyme catalyses a 1,2-diacyl-sn-glycero-3-phospho-L-serine(out) + ATP + H2O = a 1,2-diacyl-sn-glycero-3-phospho-L-serine(in) + ADP + phosphate + H(+). It catalyses the reaction a 1,2-diacyl-sn-glycero-3-phosphoethanolamine(out) + ATP + H2O = a 1,2-diacyl-sn-glycero-3-phosphoethanolamine(in) + ADP + phosphate + H(+). Functionally, catalytic component of a P4-ATPase flippase complex which catalyzes the hydrolysis of ATP coupled to the transport of aminophospholipids, phosphatidylserines (PS) and phosphatidylethanolamines (PE), from the outer to the inner leaflet of intracellular membranes. May contribute to the maintenance of membrane lipid asymmetry in endosome compartment. The protein is Phospholipid-transporting ATPase IF of Mus musculus (Mouse).